The chain runs to 342 residues: Protein-ribulosamine 3-kinase, chloroplastic (342 aa).

Residues 1-46 (MANVALLSAASPSTSSAAPRLRHVARRRPSRRSACPRSAASRLSIM) constitute a chloroplast transit peptide. 141-143 (EFI) lines the ATP pocket. The active-site Proton acceptor is the D246.

The protein belongs to the fructosamine kinase family.

It is found in the plastid. Its subcellular location is the chloroplast. The catalysed reaction is N(6)-D-ribulosyl-L-lysyl-[protein] + ATP = N(6)-(3-O-phospho-D-ribulosyl)-L-lysyl-[protein] + ADP + H(+). It carries out the reaction N(6)-(D-erythrulosyl)-L-lysyl-[protein] + ATP = N(6)-(3-O-phospho-D-erythrulosyl)-L-lysyl-[protein] + ADP + H(+). Its function is as follows. Initiates a process leading to the deglycation of proteins. Phosphorylates low-molecular-mass and protein-bound erythrulosamines and ribulosamines, but not fructosamines or psicosamines, on the third carbon of the sugar moiety. Protein-bound erythrulosamine 3-phosphates and ribulosamine 3-phosphates are unstable and decompose under physiological conditions. The chain is Protein-ribulosamine 3-kinase, chloroplastic from Oryza sativa subsp. indica (Rice).